The primary structure comprises 263 residues: Endonuclease 8 (263 aa).

Proline 2 serves as the catalytic Schiff-base intermediate with DNA. Glutamate 3 functions as the Proton donor in the catalytic mechanism. Lysine 53 acts as the Proton donor; for beta-elimination activity in catalysis. Positions 70, 125, and 169 each coordinate DNA. Residues 229-263 form an FPG-type zinc finger; the sequence is KVFHRDGELCERCGGIIEKTTLSSRPFYWCPGCQH. Residue arginine 253 is the Proton donor; for delta-elimination activity of the active site.

It belongs to the FPG family. The cofactor is Zn(2+).

The catalysed reaction is 2'-deoxyribonucleotide-(2'-deoxyribose 5'-phosphate)-2'-deoxyribonucleotide-DNA = a 3'-end 2'-deoxyribonucleotide-(2,3-dehydro-2,3-deoxyribose 5'-phosphate)-DNA + a 5'-end 5'-phospho-2'-deoxyribonucleoside-DNA + H(+). Its function is as follows. Involved in base excision repair of DNA damaged by oxidation or by mutagenic agents. Acts as a DNA glycosylase that recognizes and removes damaged bases. Has a preference for oxidized pyrimidines, such as thymine glycol, 5,6-dihydrouracil and 5,6-dihydrothymine. Has AP (apurinic/apyrimidinic) lyase activity and introduces nicks in the DNA strand. Cleaves the DNA backbone by beta-delta elimination to generate a single-strand break at the site of the removed base with both 3'- and 5'-phosphates. The chain is Endonuclease 8 from Escherichia coli O157:H7.